A 660-amino-acid chain; its full sequence is DNA mismatch repair protein MutL (660 aa).

Belongs to the DNA mismatch repair MutL/HexB family.

This protein is involved in the repair of mismatches in DNA. It is required for dam-dependent methyl-directed DNA mismatch repair. May act as a 'molecular matchmaker', a protein that promotes the formation of a stable complex between two or more DNA-binding proteins in an ATP-dependent manner without itself being part of a final effector complex. This Streptococcus equi subsp. zooepidemicus (strain H70) protein is DNA mismatch repair protein MutL.